Consider the following 150-residue polypeptide: Large ribosomal subunit protein bL9 (150 aa).

The protein belongs to the bacterial ribosomal protein bL9 family.

Binds to the 23S rRNA. The chain is Large ribosomal subunit protein bL9 from Baumannia cicadellinicola subsp. Homalodisca coagulata.